Here is a 379-residue protein sequence, read N- to C-terminus: MKILRKNHPLLKIVNHSFIDLPTPSNISSWWNFGSLLGMCLVIQILTGLFLAMHYTSDTTTAFSSVAHICRDVNYGWLIRYLHANGASMFFICLFIHVGRGIYYGSYVLSETWNIGIILLLTTMATAFVGYVLPWGQMSFWGATVITNLLSAIPYIGNTLVEWIWGGFSVDKATLTRFFAFHFILPFIIAAFALVHLLFLHETGSNNPSGLNSDSDKIPFHPYYTTKDLLGIFLLLLVLMILALFFPDVLGDPDNFTPANPLNTPAHIKPEWYFLFAYAILRSIPNKLGGVLALVLSILILATFPLLNTSKQHGLIFRPVTQVIYWIFIANLLVLTWIGGQPVEYPFTTIGQIASITYFTIIIILIPVSNTIENNIIKL.

Transmembrane regions (helical) follow at residues 33–53 (FGSL…FLAM), 77–98 (WLIR…FIHV), 113–133 (WNIG…GYVL), and 178–198 (FFAF…VHLL). Positions 83 and 97 each coordinate heme b. Residues H182 and H196 each contribute to the heme b site. H201 is a binding site for a ubiquinone. 4 consecutive transmembrane segments (helical) span residues 226-246 (TKDL…ALFF), 288-308 (LGGV…PLLN), 320-340 (VTQV…WIGG), and 347-367 (FTTI…ILIP).

The protein belongs to the cytochrome b family. As to quaternary structure, the cytochrome bc1 complex contains 11 subunits: 3 respiratory subunits (MT-CYB, CYC1 and UQCRFS1), 2 core proteins (UQCRC1 and UQCRC2) and 6 low-molecular weight proteins (UQCRH/QCR6, UQCRB/QCR7, UQCRQ/QCR8, UQCR10/QCR9, UQCR11/QCR10 and a cleavage product of UQCRFS1). This cytochrome bc1 complex then forms a dimer. Heme b is required as a cofactor.

It localises to the mitochondrion inner membrane. Component of the ubiquinol-cytochrome c reductase complex (complex III or cytochrome b-c1 complex) that is part of the mitochondrial respiratory chain. The b-c1 complex mediates electron transfer from ubiquinol to cytochrome c. Contributes to the generation of a proton gradient across the mitochondrial membrane that is then used for ATP synthesis. In Akodon mystax (Caparao grass mouse), this protein is Cytochrome b (MT-CYB).